Reading from the N-terminus, the 61-residue chain is Chi-conotoxin MrIA (61 aa).

The signal sequence occupies residues 1–19 (MRCLPVLIILLLLTASAPG). The propeptide occupies 20-48 (VVVLPKTEDDVPMSSVYGNGKSILRGILR). Cystine bridges form between cysteine 52–cysteine 61 and cysteine 53–cysteine 58. 4-hydroxyproline is present on proline 60.

This sequence belongs to the conotoxin T superfamily. In terms of tissue distribution, expressed by the venom duct.

The protein resides in the secreted. Chi-conotoxins inhibit the neuronal noradrenaline transporter (NET/SLC6A2). Activity has been described on both human (inhibition of norepinephrine uptake is IC(50)=1.26 uM) and rat (pIC(50)=6.21 corresponding IC(50)=0.16 uM) transporters. Acts as a reversible non-competitive inhibitor. The polypeptide is Chi-conotoxin MrIA (Conus marmoreus (Marble cone)).